A 156-amino-acid polypeptide reads, in one-letter code: Small ribosomal subunit protein uS7 (156 aa).

Belongs to the universal ribosomal protein uS7 family. In terms of assembly, part of the 30S ribosomal subunit. Contacts proteins S9 and S11.

Its function is as follows. One of the primary rRNA binding proteins, it binds directly to 16S rRNA where it nucleates assembly of the head domain of the 30S subunit. Is located at the subunit interface close to the decoding center, probably blocks exit of the E-site tRNA. The sequence is that of Small ribosomal subunit protein uS7 from Synechocystis sp. (strain ATCC 27184 / PCC 6803 / Kazusa).